The primary structure comprises 437 residues: MTSFRKRTVQKPIRGTRTSPHTAQVITSSGNPYLDVVIGGGLPMGSICLIEEDRFMTHAKVLAKYFLAEGVISKQEIFLGSLDDIPAEMLRRLPRPLTDQESMEQSEVQALGDAGAENGLRIAWRYNDLPLVNSEHATAKIGHHFNLMEQMDSMMLYNVKTTLWDDSPKHLDIVIDEEFSKSSSPTTPSLEQQPVEDAPPIPGTETAPQEKMPAQEEENSANNNNNNNNNSSSVTSSTKTGSQDSPLQVFHNPRYKGLLNDIQQLLRNESFVAGTKNNLCRVCLTSLGSPLWYDEHFGEDLIKFLTLLMASVRNCNSVCLITMPMHLIAKYDASLVPKIRQLVDYAIELESFAGSERETHPAFKEYSGLLHLHKMSAINTLAVHMPETPDLAFKLRRKKFIIEKFHLPPELQESSAKPDNCISGLLSNSNATASLDF.

Residues Phe179–Leu247 are disordered. Positions Lys181 to Gln192 are enriched in polar residues. The residue at position 183 (Ser183) is a Phosphoserine. Residues Ser220–Ser237 show a composition bias toward low complexity. Ser242 carries the post-translational modification Phosphoserine.

The protein belongs to the ELP4 family. In terms of assembly, component of the elongator complex composed of Elp1, Elp2, Elp3, Elp4, Elp5 and Elp6. The elongator complex associates with and stabilizes microtubules; efficient interaction requires the full complex.

The protein localises to the cytoplasm. It localises to the nucleus. The protein resides in the cytoskeleton. Its subcellular location is the spindle. The protein operates within tRNA modification; 5-methoxycarbonylmethyl-2-thiouridine-tRNA biosynthesis. In terms of biological role, component of the elongator complex, which is required for multiple tRNA modifications, including mcm5U (5-methoxycarbonylmethyl uridine), mcm5s2U (5-methoxycarbonylmethyl-2-thiouridine), and ncm5U (5-carbamoylmethyl uridine). The elongator complex catalyzes the formation of carboxymethyluridine in the wobble base at position 34 in tRNAs. Binding by the elongator complex stabilizes microtubules and promotes their growth. This induces central spindle asymmetry, promoting polarized signaling endosome trafficking during asymmetric cell division and cell fate assignation of sensory organ precursor cells. The protein is Elongator complex protein 4 of Drosophila melanogaster (Fruit fly).